The sequence spans 376 residues: Chaperone protein DnaJ (376 aa).

A J domain is found at 5–70 (DYYEVLGVAR…QKRAAYDQFG (66 aa)). The CR-type zinc finger occupies 134–212 (GTSVKIKVPT…CHGHGRVEET (79 aa)). Zn(2+) is bound by residues Cys147, Cys150, Cys164, Cys167, Cys186, Cys189, Cys200, and Cys203. CXXCXGXG motif repeat units follow at residues 147 to 154 (CTNCGGSG), 164 to 171 (CNTCGGHG), 186 to 193 (CPTCRGQG), and 200 to 207 (CNKCHGHG).

This sequence belongs to the DnaJ family. In terms of assembly, homodimer. Zn(2+) is required as a cofactor.

Its subcellular location is the cytoplasm. In terms of biological role, participates actively in the response to hyperosmotic and heat shock by preventing the aggregation of stress-denatured proteins and by disaggregating proteins, also in an autonomous, DnaK-independent fashion. Unfolded proteins bind initially to DnaJ; upon interaction with the DnaJ-bound protein, DnaK hydrolyzes its bound ATP, resulting in the formation of a stable complex. GrpE releases ADP from DnaK; ATP binding to DnaK triggers the release of the substrate protein, thus completing the reaction cycle. Several rounds of ATP-dependent interactions between DnaJ, DnaK and GrpE are required for fully efficient folding. Also involved, together with DnaK and GrpE, in the DNA replication of plasmids through activation of initiation proteins. This is Chaperone protein DnaJ from Teredinibacter turnerae (strain ATCC 39867 / T7901).